The following is a 128-amino-acid chain: Fluoride-specific ion channel FluC (128 aa).

4 consecutive transmembrane segments (helical) span residues 5-25, 35-55, 67-87, and 96-116; these read IVAIFVGAGFGALLRWFLSIG, LGTLASNLIGGYLIGIAVVAF, LFVITGFMGGLTTFSTYSVEV, and FGWALAVAALHLIGSFTLTGL. Na(+)-binding residues include G75 and T78.

The protein belongs to the fluoride channel Fluc/FEX (TC 1.A.43) family.

It is found in the cell inner membrane. The catalysed reaction is fluoride(in) = fluoride(out). Na(+) is not transported, but it plays an essential structural role and its presence is essential for fluoride channel function. In terms of biological role, fluoride-specific ion channel. Important for reducing fluoride concentration in the cell, thus reducing its toxicity. The chain is Fluoride-specific ion channel FluC from Burkholderia mallei (strain NCTC 10247).